The sequence spans 312 residues: Glyoxylate/hydroxypyruvate reductase A (312 aa).

R227 is an active-site residue. H275 (proton donor) is an active-site residue.

The protein belongs to the D-isomer specific 2-hydroxyacid dehydrogenase family. GhrA subfamily.

It is found in the cytoplasm. It catalyses the reaction glycolate + NADP(+) = glyoxylate + NADPH + H(+). The enzyme catalyses (R)-glycerate + NAD(+) = 3-hydroxypyruvate + NADH + H(+). The catalysed reaction is (R)-glycerate + NADP(+) = 3-hydroxypyruvate + NADPH + H(+). Its function is as follows. Catalyzes the NADPH-dependent reduction of glyoxylate and hydroxypyruvate into glycolate and glycerate, respectively. In Citrobacter koseri (strain ATCC BAA-895 / CDC 4225-83 / SGSC4696), this protein is Glyoxylate/hydroxypyruvate reductase A.